We begin with the raw amino-acid sequence, 259 residues long: Dihydroorotate dehydrogenase B (NAD(+)), electron transfer subunit (259 aa).

The 101-residue stretch at methionine 2–valine 102 folds into the FAD-binding FR-type domain. FAD-binding positions include arginine 53–serine 56, leucine 70–arginine 72, and glycine 77–threonine 78. Residues cysteine 221, cysteine 226, cysteine 229, and cysteine 246 each contribute to the [2Fe-2S] cluster site.

This sequence belongs to the PyrK family. Heterotetramer of 2 PyrK and 2 PyrD type B subunits. Requires [2Fe-2S] cluster as cofactor. The cofactor is FAD.

It participates in pyrimidine metabolism; UMP biosynthesis via de novo pathway; orotate from (S)-dihydroorotate (NAD(+) route): step 1/1. In terms of biological role, responsible for channeling the electrons from the oxidation of dihydroorotate from the FMN redox center in the PyrD type B subunit to the ultimate electron acceptor NAD(+). The protein is Dihydroorotate dehydrogenase B (NAD(+)), electron transfer subunit of Bacillus cereus (strain Q1).